A 219-amino-acid polypeptide reads, in one-letter code: MDADFWLDRWREGRTHFHQTRVTPLLQKYWPTLDVPAGGQVLVPLAGKSLDMVWLAGQGLRVLGVELSQLAVEQFFDENDLRPEIHQSAQGRHYVAGNLELICGDVFALEDATLAACAGVYDRAALVALPEPMRKRYAREVYGRLGRGCRGILITLDYPQDQMEGPPFSVDDAEVQALYAGHTEARLIDRRDILDKEPKFNQRGVARLDTLVYRLERLG.

Residues tryptophan 10, leucine 45, glutamate 66, and arginine 123 each contribute to the S-adenosyl-L-methionine site.

The protein belongs to the class I-like SAM-binding methyltransferase superfamily. TPMT family.

Its subcellular location is the cytoplasm. It carries out the reaction S-adenosyl-L-methionine + a thiopurine = S-adenosyl-L-homocysteine + a thiopurine S-methylether.. This chain is Thiopurine S-methyltransferase, found in Bordetella pertussis (strain Tohama I / ATCC BAA-589 / NCTC 13251).